We begin with the raw amino-acid sequence, 111 residues long: Probable 4-amino-4-deoxy-L-arabinose-phosphoundecaprenol flippase subunit ArnE (111 aa).

The Cytoplasmic portion of the chain corresponds to 1 to 35 (MIWLTLVFASLLSVAGQLCQKQATCFAAVNKRRKH). The chain crosses the membrane as a helical span at residues 36 to 56 (IVLWLGLALACLGLAMVLWLL). Residues 40-109 (LGLALACLGL…IIGGIVILGS (70 aa)) form the EamA domain. Residues 57–60 (VLQN) are Periplasmic-facing. A helical membrane pass occupies residues 61 to 81 (VPVGIAYPMLSLNFVWVTLAA). Over 82-87 (VKLWHE) the chain is Cytoplasmic. A helical transmembrane segment spans residues 88–108 (PVSLRHWCGVAFIIGGIVILG). The Periplasmic segment spans residues 109–111 (STV).

The protein belongs to the ArnE family. In terms of assembly, heterodimer of ArnE and ArnF.

The protein localises to the cell inner membrane. It participates in bacterial outer membrane biogenesis; lipopolysaccharide biosynthesis. Functionally, translocates 4-amino-4-deoxy-L-arabinose-phosphoundecaprenol (alpha-L-Ara4N-phosphoundecaprenol) from the cytoplasmic to the periplasmic side of the inner membrane. This chain is Probable 4-amino-4-deoxy-L-arabinose-phosphoundecaprenol flippase subunit ArnE, found in Escherichia coli (strain UTI89 / UPEC).